Reading from the N-terminus, the 559-residue chain is DNA ligase (559 aa).

ATP is bound at residue Glu-231. Lys-233 acts as the N6-AMP-lysine intermediate in catalysis. ATP-binding residues include Arg-238 and Glu-285. Mg(2+)-binding residues include Glu-285 and Glu-379. Positions 384 and 399 each coordinate ATP.

The protein belongs to the ATP-dependent DNA ligase family. As to quaternary structure, interacts with host TOP2A and TOP2B. Mg(2+) serves as cofactor.

The protein resides in the host cytoplasm. It catalyses the reaction ATP + (deoxyribonucleotide)n-3'-hydroxyl + 5'-phospho-(deoxyribonucleotide)m = (deoxyribonucleotide)n+m + AMP + diphosphate.. Functionally, DNA ligase that seals nicks in double-stranded DNA during DNA replication, DNA recombination and DNA repair. Recruits cellular topoisomerase II to sites of viral replication and assembly. The polypeptide is DNA ligase (OPG180) (Monkeypox virus).